The following is a 37-amino-acid chain: Cytochrome b6-f complex subunit 5 (37 aa).

A helical membrane pass occupies residues 5-25; the sequence is LLSGIVLGMIPITLAGLFVTA.

This sequence belongs to the PetG family. In terms of assembly, the 4 large subunits of the cytochrome b6-f complex are cytochrome b6, subunit IV (17 kDa polypeptide, PetD), cytochrome f and the Rieske protein, while the 4 small subunits are PetG, PetL, PetM and PetN. The complex functions as a dimer.

The protein resides in the plastid. The protein localises to the chloroplast thylakoid membrane. Functionally, component of the cytochrome b6-f complex, which mediates electron transfer between photosystem II (PSII) and photosystem I (PSI), cyclic electron flow around PSI, and state transitions. PetG is required for either the stability or assembly of the cytochrome b6-f complex. This chain is Cytochrome b6-f complex subunit 5, found in Mesostigma viride (Green alga).